The sequence spans 438 residues: Trigger factor (438 aa).

The region spanning 163-248 is the PPIase FKBP-type domain; the sequence is GEIAVLDFAA…VHAVKERKLP (86 aa).

This sequence belongs to the FKBP-type PPIase family. Tig subfamily.

It localises to the cytoplasm. The catalysed reaction is [protein]-peptidylproline (omega=180) = [protein]-peptidylproline (omega=0). Its function is as follows. Involved in protein export. Acts as a chaperone by maintaining the newly synthesized protein in an open conformation. Functions as a peptidyl-prolyl cis-trans isomerase. This Oleidesulfovibrio alaskensis (strain ATCC BAA-1058 / DSM 17464 / G20) (Desulfovibrio alaskensis) protein is Trigger factor.